The sequence spans 422 residues: Structural polyprotein (422 aa).

The Extracellular portion of the chain corresponds to 1–359; the sequence is SVTEHFNVYK…WPHEIIQYYY (359 aa). Residues asparagine 200 and asparagine 262 are each glycosylated (N-linked (GlcNAc...) asparagine; by host). The helical transmembrane segment at 360–382 threads the bilayer; that stretch reads GLYPAATIAAVSGXSLMALLTLA. At 383 to 422 the chain is on the cytoplasmic side; that stretch reads ATCCMLATARRKCLTPYALTPGAVVPLTLGLXXCAPRANA. Residues cysteine 385, cysteine 395, and cysteine 416 are each lipidated (S-palmitoyl cysteine; by host). The segment at 395–415 is transient transmembrane before p62-6K protein processing; the sequence is CLTPYALTPGAVVPLTLGLXX.

As to quaternary structure, spike glycoprotein E2: Processing of the precursor of protein E3/E2 into E2 and E3 results in a heterodimer of the spike glycoproteins E2 and E1. Spike glycoprotein E2: Spike at virion surface are constituted of three E2-E1 heterodimers. Spike glycoprotein E2: Interacts with 6K protein. In terms of processing, structural polyprotein: Specific enzymatic cleavages in vivo yield mature proteins. Capsid protein is auto-cleaved during polyprotein translation, unmasking a signal peptide at the N-terminus of the precursor of E3/E2. The remaining polyprotein is then targeted to the host endoplasmic reticulum, where host signal peptidase cleaves it into pE2, 6K and E1 proteins. pE2 is further processed to mature E3 and E2 by host furin in trans-Golgi vesicle. Post-translationally, spike glycoprotein E2: Palmitoylated via thioester bonds. These palmitoylations may induce disruption of the C-terminus transmembrane. This would result in the reorientation of E2 C-terminus from lumenal to cytoplasmic side. Spike glycoprotein E2: N-glycosylated.

The protein resides in the virion membrane. Its subcellular location is the host cell membrane. Functionally, spike glycoprotein E2: Plays a role in viral attachment to target host cell, by binding to the cell receptor. Synthesized as a p62 precursor which is processed by furin at the cell membrane just before virion budding, giving rise to E2-E1 heterodimer. The p62-E1 heterodimer is stable, whereas E2-E1 is unstable and dissociate at low pH. p62 is processed at the last step, presumably to avoid E1 fusion activation before its final export to cell surface. E2 C-terminus contains a transitory transmembrane that would be disrupted by palmitoylation, resulting in reorientation of the C-terminal tail from lumenal to cytoplasmic side. This step is critical since E2 C-terminus is involved in budding by interacting with capsid proteins. This release of E2 C-terminus in cytoplasm occurs lately in protein export, and precludes premature assembly of particles at the endoplasmic reticulum membrane. The chain is Structural polyprotein from Ross river virus (strain 213970) (RRV).